The following is a 181-amino-acid chain: Oligoribonuclease (181 aa).

Positions 8–171 (LIWVDLEMTG…DDIRESIAEL (164 aa)) constitute an Exonuclease domain. The active site involves Tyr-129.

Belongs to the oligoribonuclease family.

It is found in the cytoplasm. Its function is as follows. 3'-to-5' exoribonuclease specific for small oligoribonucleotides. In Vibrio campbellii (strain ATCC BAA-1116), this protein is Oligoribonuclease.